We begin with the raw amino-acid sequence, 375 residues long: DNA replication and repair protein RecF (375 aa).

Position 30–37 (30–37) interacts with ATP; it reads GENAQGKT.

The protein belongs to the RecF family.

It is found in the cytoplasm. The RecF protein is involved in DNA metabolism; it is required for DNA replication and normal SOS inducibility. RecF binds preferentially to single-stranded, linear DNA. It also seems to bind ATP. This is DNA replication and repair protein RecF from Bacillus cereus (strain ZK / E33L).